A 373-amino-acid polypeptide reads, in one-letter code: NAD-dependent protein deacylase SRT2 (373 aa).

The transit peptide at 1–47 (MNMRRVFGGVSTDLFPSRSMYRPLQSGGNLVMLFKGCRRFVRTTCRV) directs the protein to the mitochondrion. In terms of domain architecture, Deacetylase sirtuin-type spans 75–373 (DPPNMEDIHK…DVGSLSVPAL (299 aa)). NAD(+)-binding positions include 100–120 (GAGVSTECGIPDYRSPNGAYS) and 179–182 (QNVD). His196 serves as the catalytic Proton acceptor. Zn(2+) contacts are provided by Cys204, Cys207, Cys271, and Cys274. NAD(+) contacts are provided by residues 311-313 (GSS), 337-339 (NIG), and Val355.

This sequence belongs to the sirtuin family. Class II subfamily. In terms of assembly, binds to the promoter region of genes influenced by ethylene. Interacts with ENAP1; this interaction is enhanced in the presence of ethylene. Requires Zn(2+) as cofactor.

The protein resides in the mitochondrion matrix. The protein localises to the nucleus. It catalyses the reaction N(6)-acetyl-L-lysyl-[protein] + NAD(+) + H2O = 2''-O-acetyl-ADP-D-ribose + nicotinamide + L-lysyl-[protein]. NAD-dependent protein deacylase. Catalyzes the NAD-dependent hydrolysis of acyl groups from lysine residues. Involved in responses to ethylene leading to the transcriptional repression of some ethylene-responsive genes via the regulation of histone acetylation H3K9Ac. Negatively regulates plant basal defense against plant pathogens, possibly by suppressing salicylic acid biosynthesis. The chain is NAD-dependent protein deacylase SRT2 from Arabidopsis thaliana (Mouse-ear cress).